We begin with the raw amino-acid sequence, 257 residues long: MAAPAPGLISVFSSPQELGASLAQLVAQRAASCLEGNRGRFALGLSGGSLVSMLARDLPAATAPAGPASFARWTLGFCDERLVPFDHAESTYGLYRTHLLSKLPIPDSQVLTIDPALPVEDAAEDYARKLRQAFQGDTVPVFDLLILGVGPDGHTCSLFPGHPLLQEREKIVAPIGDSPKPPPQRVTLTLPVLNAAQSVIFVATGEGKAAVLKRILEDQESALPAAMVQPRTGALCWFLDEAAARLLSVPFEKHSTL.

The residue at position 2 (alanine 2) is an N-acetylalanine. Phosphoserine is present on serine 49. Lysine 180 is modified (N6-acetyllysine).

Belongs to the glucosamine/galactosamine-6-phosphate isomerase family. 6-phosphogluconolactonase subfamily.

Its subcellular location is the cytoplasm. The catalysed reaction is 6-phospho-D-glucono-1,5-lactone + H2O = 6-phospho-D-gluconate + H(+). It participates in carbohydrate degradation; pentose phosphate pathway; D-ribulose 5-phosphate from D-glucose 6-phosphate (oxidative stage): step 2/3. Its function is as follows. Hydrolysis of 6-phosphogluconolactone to 6-phosphogluconate. This chain is 6-phosphogluconolactonase, found in Rattus norvegicus (Rat).